The following is a 216-amino-acid chain: Probable transaldolase (216 aa).

Residue K84 is the Schiff-base intermediate with substrate of the active site.

This sequence belongs to the transaldolase family. Type 3B subfamily.

It is found in the cytoplasm. It carries out the reaction D-sedoheptulose 7-phosphate + D-glyceraldehyde 3-phosphate = D-erythrose 4-phosphate + beta-D-fructose 6-phosphate. It participates in carbohydrate degradation; pentose phosphate pathway; D-glyceraldehyde 3-phosphate and beta-D-fructose 6-phosphate from D-ribose 5-phosphate and D-xylulose 5-phosphate (non-oxidative stage): step 2/3. Transaldolase is important for the balance of metabolites in the pentose-phosphate pathway. The sequence is that of Probable transaldolase from Exiguobacterium sp. (strain ATCC BAA-1283 / AT1b).